We begin with the raw amino-acid sequence, 142 residues long: Hemoglobin subunit beta-C (142 aa).

In terms of domain architecture, Globin spans 2–142 (PNKALITGFW…VASALAHRYH (141 aa)). Positions 59 and 88 each coordinate heme b.

The protein belongs to the globin family. As to quaternary structure, heterotetramer of two alpha chains and two beta chains. As to expression, red blood cells.

Its function is as follows. Involved in oxygen transport from the lung to the various peripheral tissues. The protein is Hemoglobin subunit beta-C (HBBC) of Ovis aries (Sheep).